A 599-amino-acid polypeptide reads, in one-letter code: Elongation factor 4 (599 aa).

In terms of domain architecture, tr-type G spans 5–187 (SHIRNFSIIA…RLVTTIPAPT (183 aa)). GTP-binding positions include 17 to 22 (DHGKST) and 134 to 137 (NKID).

This sequence belongs to the TRAFAC class translation factor GTPase superfamily. Classic translation factor GTPase family. LepA subfamily.

It is found in the cell inner membrane. It catalyses the reaction GTP + H2O = GDP + phosphate + H(+). Its function is as follows. Required for accurate and efficient protein synthesis under certain stress conditions. May act as a fidelity factor of the translation reaction, by catalyzing a one-codon backward translocation of tRNAs on improperly translocated ribosomes. Back-translocation proceeds from a post-translocation (POST) complex to a pre-translocation (PRE) complex, thus giving elongation factor G a second chance to translocate the tRNAs correctly. Binds to ribosomes in a GTP-dependent manner. This Pseudomonas fluorescens (strain ATCC BAA-477 / NRRL B-23932 / Pf-5) protein is Elongation factor 4.